A 197-amino-acid polypeptide reads, in one-letter code: Small ribosomal subunit protein uS4c (197 aa).

The S4 RNA-binding domain occupies M84–L143.

The protein belongs to the universal ribosomal protein uS4 family. Part of the 30S ribosomal subunit. Contacts protein S5. The interaction surface between S4 and S5 is involved in control of translational fidelity.

It localises to the plastid. It is found in the chloroplast. One of the primary rRNA binding proteins, it binds directly to 16S rRNA where it nucleates assembly of the body of the 30S subunit. Functionally, with S5 and S12 plays an important role in translational accuracy. The protein is Small ribosomal subunit protein uS4c (rps4) of Adiantum capillus-veneris (Maidenhair fern).